We begin with the raw amino-acid sequence, 22 residues long: Hemocyanin subunit 4 (22 aa).

Belongs to the tyrosinase family. Hemocyanin subfamily. In terms of tissue distribution, hemolymph.

It localises to the secreted. Its subcellular location is the extracellular space. Hemocyanins are copper-containing oxygen carriers occurring freely dissolved in the hemolymph of many mollusks and arthropods. This Homarus americanus (American lobster) protein is Hemocyanin subunit 4.